The primary structure comprises 1076 residues: Isoleucine--tRNA ligase (1076 aa).

The 'HIGH' region motif lies at 47-57 (PYTTGQIHLGT). The short motif at 591-595 (KMSKS) is the 'KMSKS' region element. ATP is bound at residue lysine 594.

The protein belongs to the class-I aminoacyl-tRNA synthetase family. IleS type 2 subfamily. Monomer. Zn(2+) is required as a cofactor.

Its subcellular location is the cytoplasm. The enzyme catalyses tRNA(Ile) + L-isoleucine + ATP = L-isoleucyl-tRNA(Ile) + AMP + diphosphate. Functionally, catalyzes the attachment of isoleucine to tRNA(Ile). As IleRS can inadvertently accommodate and process structurally similar amino acids such as valine, to avoid such errors it has two additional distinct tRNA(Ile)-dependent editing activities. One activity is designated as 'pretransfer' editing and involves the hydrolysis of activated Val-AMP. The other activity is designated 'posttransfer' editing and involves deacylation of mischarged Val-tRNA(Ile). The protein is Isoleucine--tRNA ligase of Methanoregula boonei (strain DSM 21154 / JCM 14090 / 6A8).